Reading from the N-terminus, the 225-residue chain is Ribonuclease 3 (225 aa).

The RNase III domain occupies 7 to 129 (MPRLCRTLGY…IIGAVYIDSG (123 aa)). E42 provides a ligand contact to Mg(2+). Residue D46 is part of the active site. Residues D115 and E118 each coordinate Mg(2+). Residue E118 is part of the active site. The 71-residue stretch at 155–225 (DPKTLLQELL…AADALELMKR (71 aa)) folds into the DRBM domain.

The protein belongs to the ribonuclease III family. In terms of assembly, homodimer. Mg(2+) is required as a cofactor.

The protein resides in the cytoplasm. The catalysed reaction is Endonucleolytic cleavage to 5'-phosphomonoester.. Functionally, digests double-stranded RNA. Involved in the processing of primary rRNA transcript to yield the immediate precursors to the large and small rRNAs (23S and 16S). Processes some mRNAs, and tRNAs when they are encoded in the rRNA operon. Processes pre-crRNA and tracrRNA of type II CRISPR loci if present in the organism. This Shewanella sediminis (strain HAW-EB3) protein is Ribonuclease 3.